A 544-amino-acid chain; its full sequence is Rubrofusarin-specific efflux pump aurT (544 aa).

Residues 1–12 show a composition bias toward basic and acidic residues; sequence MTDNTDMEKLDR. Residues 1–42 form a disordered region; that stretch reads MTDNTDMEKLDRATTPTPIPNEAPPTSEPSESKPEEAEDESK. Residues 17-27 show a composition bias toward pro residues; that stretch reads TPIPNEAPPTS. Over residues 30–42 the composition is skewed to basic and acidic residues; that stretch reads SESKPEEAEDESK. Helical transmembrane passes span 45–65, 89–111, 116–136, 146–166, 177–197, 205–225, 246–266, and 276–296; these read HGLK…LVAL, WYAS…IFTF, TVYL…GVAP, AIAG…ITTV, GMMG…GGAF, WCFY…ILLF, WGNL…QWGG, and IVAL…IQIW. An N-linked (GlcNAc...) asparagine glycan is attached at asparagine 300. 6 helical membrane passes run 318–338, 357–377, 380–400, 407–427, 444–464, and 514–534; these read IFAF…PIWF, VLSL…VGWF, VFFS…TFVV, WIGY…LASL, LMFF…QAVF, and YFYV…GIEW.

The protein belongs to the major facilitator superfamily. TCR/Tet family.

It localises to the cell membrane. Its pathway is pigment biosynthesis. In terms of biological role, rubrofusarin-specific efflux pump; part of the gene cluster that mediates the biosynthesis of aurofusarin, a red mycelium pigment which is acting as a mycotoxin. The first step is performed by the polyketide synthase which condenses one acetyl-CoA and 6 malonyl-CoA units to form the first intermediate, the cyclic heptaketide and yellow pigment YWA1. The C2 hydroxyl group in the pyrone ring of YWA1 is probably formed during ring closure by an aldol-type cyclization reaction. The dehydratase aurZ then acts as the first tailoring enzyme in the aurofusarin biosynthetic pathway by converting YWA1 to nor-rubrofusarin. Nor-rubrofusarin is then methylated to rubrofusarin by the O-methyltransferase aurJ. Rubrofusarin is then transported across the plasma membrane by the rubrofusarin-specific pump aurT for further enzymatic processing by the extracellular complex composed of GIP1, aurF, aurO and aurS to yield aurofusarin. This is Rubrofusarin-specific efflux pump aurT from Gibberella zeae (strain ATCC MYA-4620 / CBS 123657 / FGSC 9075 / NRRL 31084 / PH-1) (Wheat head blight fungus).